The chain runs to 428 residues: Protein clpf-1 (428 aa).

ATP-binding positions include Glu-16, Arg-56, and 124 to 129 (DVGKTT).

This sequence belongs to the Clp1 family. Clp1 subfamily.

It is found in the nucleus. Functionally, required for endonucleolytic cleavage during polyadenylation-dependent pre-mRNA 3'-end formation. The protein is Protein clpf-1 of Caenorhabditis elegans.